The following is a 278-amino-acid chain: Octanoyl-[GcvH]:protein N-octanoyltransferase (278 aa).

Positions 44–249 (SQSPPTLRAW…TLQQHGASLL (206 aa)) constitute a BPL/LPL catalytic domain. Cysteine 148 functions as the Acyl-thioester intermediate in the catalytic mechanism.

This sequence belongs to the octanoyltransferase LipL family.

It carries out the reaction N(6)-octanoyl-L-lysyl-[glycine-cleavage complex H protein] + L-lysyl-[lipoyl-carrier protein] = N(6)-octanoyl-L-lysyl-[lipoyl-carrier protein] + L-lysyl-[glycine-cleavage complex H protein]. It functions in the pathway protein modification; protein lipoylation via endogenous pathway; protein N(6)-(lipoyl)lysine from octanoyl-[acyl-carrier-protein]. Catalyzes the amidotransfer (transamidation) of the octanoyl moiety from octanoyl-GcvH to the lipoyl domain of the E2 subunit of lipoate-dependent enzymes. The chain is Octanoyl-[GcvH]:protein N-octanoyltransferase from Halalkalibacterium halodurans (strain ATCC BAA-125 / DSM 18197 / FERM 7344 / JCM 9153 / C-125) (Bacillus halodurans).